We begin with the raw amino-acid sequence, 1210 residues long: Multimerin-1 (1210 aa).

Residues methionine 1 to arginine 19 form the signal peptide. The tract at residues alanine 57–lysine 102 is disordered. Residues glutamine 80–proline 92 show a composition bias toward low complexity. Asparagine 133 is a glycosylation site (N-linked (GlcNAc...) asparagine). Positions serine 143–serine 155 are enriched in polar residues. Residues serine 143–threonine 190 are disordered. Asparagine 161 carries N-linked (GlcNAc...) asparagine glycosylation. Residues serine 163–arginine 176 are compositionally biased toward basic and acidic residues. The span at asparagine 177 to threonine 189 shows a compositional bias: polar residues. In terms of domain architecture, EMI spans glycine 192 to leucine 267. 3 cysteine pairs are disulfide-bonded: cysteine 196/cysteine 257, cysteine 222/cysteine 230, and cysteine 256/cysteine 265. Residue threonine 201 is glycosylated (O-linked (Fuc) threonine). Threonine 250 carries O-linked (Fuc) threonine glycosylation. A disordered region spans residues alanine 276–cysteine 299. The stretch at alanine 303–asparagine 338 forms a coiled coil. N-linked (GlcNAc...) asparagine glycosylation is found at asparagine 328, asparagine 415, asparagine 491, asparagine 525, asparagine 560, asparagine 602, asparagine 712, asparagine 765, asparagine 810, asparagine 822, asparagine 903, asparagine 915, asparagine 963, and asparagine 1000. The stretch at leucine 564–glutamine 690 forms a coiled coil. Residues phenylalanine 809–glycine 846 adopt a coiled-coil conformation. An EGF-like domain is found at glutamate 1023–threonine 1059. Disulfide bonds link cysteine 1027-cysteine 1038, cysteine 1032-cysteine 1047, and cysteine 1049-cysteine 1058. The O-linked (Fuc) threonine glycan is linked to threonine 1037. The C1q domain occupies arginine 1078 to threonine 1210.

Multimeric. Composed of varying sized, disulfide-linked multimers, the smallest of which is a homotrimer. Proteolysis of the promultimerin in the N-terminal region, leads to the mature p155 form that is stored in platelets. Interacts with factor V/Va. Post-translationally, extensively N-glycosylated. O-fucosylated within the EMI domain (at Thr-201 and Thr-250) by FUT10/POFUT3 and FUT11/POFUT4. O-fucosylation at Thr-201 and Thr-1037 are required for facilitating protein folding and secretion.

The protein resides in the secreted. In terms of biological role, carrier protein for platelet (but not plasma) factor V/Va. Plays a role in the storage and stabilization of factor V in platelets. Upon release following platelet activation, may limit platelet and plasma factor Va-dependent thrombin generation. Ligand for integrin alpha-IIb/beta-3 and integrin alpha-V/beta-3 on activated platelets, and may function as an extracellular matrix or adhesive protein. The polypeptide is Multimerin-1 (Mus musculus (Mouse)).